Here is a 234-residue protein sequence, read N- to C-terminus: MAHVAKKFKAASAKVDRVKRYKLDEAMSLVKQTATKKFDETVDAAINLGVDPKHADQVVRGAVVLPHGMGKAVKIAVFAKGDKAREAQEAGADIVGAEDLAEKVQGGFMDFDKVLATPDMMGVVGRLGKVLGPRGLMPNPKVGTVSADIARAVKEQKAGKVEFRVEKAGIVHVPFGKASFEPEKLKANFSAIMEIIYKAKPQTAKGVYVKNVTLSTTMGPGIKLDLSELAAAHG.

It belongs to the universal ribosomal protein uL1 family. In terms of assembly, part of the 50S ribosomal subunit.

Functionally, binds directly to 23S rRNA. The L1 stalk is quite mobile in the ribosome, and is involved in E site tRNA release. In terms of biological role, protein L1 is also a translational repressor protein, it controls the translation of the L11 operon by binding to its mRNA. The polypeptide is Large ribosomal subunit protein uL1 (Anaeromyxobacter sp. (strain Fw109-5)).